The sequence spans 425 residues: Sucrose-phosphatase 1 (425 aa).

Belongs to the sucrose phosphatase family. Homodimer. Requires Mg(2+) as cofactor.

The enzyme catalyses sucrose 6(F)-phosphate + H2O = sucrose + phosphate. The protein operates within glycan biosynthesis; sucrose biosynthesis; sucrose from D-fructose 6-phosphate and UDP-alpha-D-glucose: step 2/2. With respect to regulation, inhibited by EDTA. Catalyzes the final step of sucrose synthesis. The protein is Sucrose-phosphatase 1 (SPP1) of Nicotiana tabacum (Common tobacco).